Reading from the N-terminus, the 327-residue chain is Vacuolar protein sorting-associated protein 26A (327 aa).

A disordered region spans residues 305–327; that stretch reads RNFHQRYESPEPRPSLSAEQPEM.

The protein belongs to the VPS26 family. Component of the heterotrimeric retromer cargo-selective complex (CSC) which is believed to associate with variable sorting nexins to form functionally distinct retromer complex variants.

The protein localises to the cytoplasm. The protein resides in the endosome membrane. Its subcellular location is the early endosome. Acts as a component of the retromer cargo-selective complex (CSC). The CSC is believed to be the core functional component of retromer or respective retromer complex variants acting to prevent missorting of selected transmembrane cargo proteins into the lysosomal degradation pathway. Retromer mediates retrograde transport of cargo proteins from endosomes to the trans-Golgi network (TGN). The polypeptide is Vacuolar protein sorting-associated protein 26A (vps26a) (Danio rerio (Zebrafish)).